The primary structure comprises 607 residues: Threonine--tRNA ligase (607 aa).

The segment at aspartate 200 to proline 502 is catalytic. Zn(2+) contacts are provided by cysteine 299, histidine 350, and histidine 479.

Belongs to the class-II aminoacyl-tRNA synthetase family. Homodimer. Requires Zn(2+) as cofactor.

Its subcellular location is the cytoplasm. It catalyses the reaction tRNA(Thr) + L-threonine + ATP = L-threonyl-tRNA(Thr) + AMP + diphosphate + H(+). In terms of biological role, catalyzes the attachment of threonine to tRNA(Thr) in a two-step reaction: L-threonine is first activated by ATP to form Thr-AMP and then transferred to the acceptor end of tRNA(Thr). Also edits incorrectly charged L-seryl-tRNA(Thr). The chain is Threonine--tRNA ligase from Synechococcus sp. (strain ATCC 27144 / PCC 6301 / SAUG 1402/1) (Anacystis nidulans).